The primary structure comprises 362 residues: Myricetin 3'/5'-O-methyltransferase 1 (362 aa).

Asp229 provides a ligand contact to S-adenosyl-L-methionine. Catalysis depends on His267, which acts as the Proton acceptor.

Belongs to the class I-like SAM-binding methyltransferase superfamily. Cation-independent O-methyltransferase family. In terms of assembly, homodimer. As to expression, mainly expressed in leaves secreting glandular trichomes types 1 and 4 and, to a lesser extent, in storage trichomes type 6.

It catalyses the reaction myricetin + S-adenosyl-L-methionine = laricitrin + S-adenosyl-L-homocysteine + H(+). It carries out the reaction laricitrin + S-adenosyl-L-methionine = syringetin + S-adenosyl-L-homocysteine + H(+). The enzyme catalyses a 3'-hydroxyflavone + S-adenosyl-L-methionine = a 3'-methoxyflavone + S-adenosyl-L-homocysteine + H(+). The catalysed reaction is a 5'-hydroxy-3'-methoxyflavone + S-adenosyl-L-methionine = a 3',5'-dimethoxyflavone + S-adenosyl-L-homocysteine + H(+). It catalyses the reaction quercetin + S-adenosyl-L-methionine = isorhamnetin + S-adenosyl-L-homocysteine + H(+). It carries out the reaction rhamnetin + S-adenosyl-L-methionine = rhamnacene + S-adenosyl-L-homocysteine + H(+). The enzyme catalyses 3',4',5,7-tetrahydroxy-3-methoxyflavone + S-adenosyl-L-methionine = 3,3'-O-dimethylquercetin + S-adenosyl-L-homocysteine + H(+). It participates in flavonoid metabolism. Flavonoid 3'/5'-O-methyltransferase involved in the biosynthesis of polymethoxylated flavonoids natural products such as myricetin derivatives, aroma compounds possessing antioxidant properties and exhibiting pharmacological activities such as anti-carcinogen, anti-viral, anti-thrombotic, anti-diabetic, anti-atherosclerotic, and anti-inflammatory effects. Catalyzes S-adenosylmethionine-dependent regioselective 3'/5'-O-methylation of flavonoids; active on various hydroxylated flavonoid substrates, including myricetin and quercetin, but inactive toward kaempferol. Mediates the formation of 3'-methyl derivatives from quercetin, myricetin, 3-methyl quercetin and 7-methyl quercetin (rhamnetin), producing 3'-methyl quercetin (isorhamnetin), 3'-methyl myricetin (laricitrin), 3,3'-dimethyl quercetin (3-O-methylisorhamnetin) and 7,3'-dimethyl quercetin (7-O-methylisorhamnetin), respectively. Triggers the 5'-O-methylation of 3'-methyl myricetin (laricitrin), thus leading to production of 3',5'-dimethyl myricetin (syringetin). The protein is Myricetin 3'/5'-O-methyltransferase 1 of Solanum habrochaites (Wild tomato).